A 248-amino-acid chain; its full sequence is PF03932 family protein CutC (248 aa).

It belongs to the CutC family. In terms of assembly, homodimer.

The protein resides in the cytoplasm. The chain is PF03932 family protein CutC from Salmonella heidelberg (strain SL476).